The sequence spans 31 residues: Morintide mO3 (31 aa).

Residues 1 to 30 (NRLCCSQYGFCGTTSEYCSRANGCQSNCWG) form the Chitin-binding type-1 domain. 2 disulfides stabilise this stretch: C4–C18 and C24–C28.

Seeds (at protein level).

Its function is as follows. Chitin-binding protein which functions in defense against chitin-containing fungal pathogens. The sequence is that of Morintide mO3 from Moringa oleifera (Horseradish tree).